A 188-amino-acid polypeptide reads, in one-letter code: MSFSPASSEPHDAPAAAGSSVPASRSIAERWKMEAAPIRARLLLRAFAWLFSLLALVVMATDVHGRGGAQDFSTYPEYNYCLGMSIIALLYATAQLVRDAHRLSSGRDLVAGRKAAAVVDFAGDQVVAYSLISGLSAAAPVTDYMRQATDNLFNDSAAAAISLAFFAFLAISLSALISGYNLSLEAIV.

The disordered stretch occupies residues 1–21; it reads MSFSPASSEPHDAPAAAGSSV. Topologically, residues 1 to 42 are cytoplasmic; sequence MSFSPASSEPHDAPAAAGSSVPASRSIAERWKMEAAPIRARL. A helical transmembrane segment spans residues 43 to 63; it reads LLRAFAWLFSLLALVVMATDV. The Extracellular segment spans residues 64-76; the sequence is HGRGGAQDFSTYP. Residues 77-97 form a helical membrane-spanning segment; that stretch reads EYNYCLGMSIIALLYATAQLV. Residues 98-114 are Cytoplasmic-facing; the sequence is RDAHRLSSGRDLVAGRK. The helical transmembrane segment at 115–135 threads the bilayer; that stretch reads AAAVVDFAGDQVVAYSLISGL. At 136–156 the chain is on the extracellular side; it reads SAAAPVTDYMRQATDNLFNDS. Residue asparagine 154 is glycosylated (N-linked (GlcNAc...) asparagine). The chain crosses the membrane as a helical span at residues 157–177; the sequence is AAAAISLAFFAFLAISLSALI. Residues 178–188 lie on the Cytoplasmic side of the membrane; that stretch reads SGYNLSLEAIV.

It belongs to the Casparian strip membrane proteins (CASP) family. As to quaternary structure, homodimer and heterodimers.

It is found in the cell membrane. The protein is CASP-like protein 4B3 of Hordeum vulgare subsp. vulgare (Domesticated barley).